We begin with the raw amino-acid sequence, 345 residues long: tRNA-specific 2-thiouridylase MnmA (345 aa).

ATP-binding positions include 6-13 (LMSGGVDS) and leucine 32. Cysteine 92 acts as the Nucleophile in catalysis. A disulfide bridge connects residues cysteine 92 and cysteine 191. Glycine 116 provides a ligand contact to ATP. Positions 138 to 140 (KDQ) are interaction with tRNA. Cysteine 191 serves as the catalytic Cysteine persulfide intermediate. The segment at 293–294 (RY) is interaction with tRNA.

It belongs to the MnmA/TRMU family.

The protein resides in the cytoplasm. The enzyme catalyses S-sulfanyl-L-cysteinyl-[protein] + uridine(34) in tRNA + AH2 + ATP = 2-thiouridine(34) in tRNA + L-cysteinyl-[protein] + A + AMP + diphosphate + H(+). In terms of biological role, catalyzes the 2-thiolation of uridine at the wobble position (U34) of tRNA, leading to the formation of s(2)U34. This is tRNA-specific 2-thiouridylase MnmA from Helicobacter hepaticus (strain ATCC 51449 / 3B1).